The sequence spans 360 residues: Phenylalanine--tRNA ligase alpha subunit (360 aa).

E260 serves as a coordination point for Mg(2+).

Belongs to the class-II aminoacyl-tRNA synthetase family. Phe-tRNA synthetase alpha subunit type 1 subfamily. As to quaternary structure, tetramer of two alpha and two beta subunits. Mg(2+) serves as cofactor.

Its subcellular location is the cytoplasm. It carries out the reaction tRNA(Phe) + L-phenylalanine + ATP = L-phenylalanyl-tRNA(Phe) + AMP + diphosphate + H(+). The sequence is that of Phenylalanine--tRNA ligase alpha subunit from Rhizobium johnstonii (strain DSM 114642 / LMG 32736 / 3841) (Rhizobium leguminosarum bv. viciae).